Here is a 120-residue protein sequence, read N- to C-terminus: MSYRKLGRTSAQRKAMLRDLTTDLIINERIETTEARAKELRSVVEKMITLGKRGDLHARRQAAAYIRNEVADAEKNQDALQKLFSDVAPRYEERQGGYTRIMKLGPRRGDGAPMAIIELV.

It belongs to the bacterial ribosomal protein bL17 family. As to quaternary structure, part of the 50S ribosomal subunit. Contacts protein L32.

In Bacillus licheniformis (strain ATCC 14580 / DSM 13 / JCM 2505 / CCUG 7422 / NBRC 12200 / NCIMB 9375 / NCTC 10341 / NRRL NRS-1264 / Gibson 46), this protein is Large ribosomal subunit protein bL17.